The following is a 369-amino-acid chain: 4-hydroxy-3-methylbut-2-en-1-yl diphosphate synthase (flavodoxin) (369 aa).

Residues C270, C273, C305, and E312 each contribute to the [4Fe-4S] cluster site.

This sequence belongs to the IspG family. It depends on [4Fe-4S] cluster as a cofactor.

The enzyme catalyses (2E)-4-hydroxy-3-methylbut-2-enyl diphosphate + oxidized [flavodoxin] + H2O + 2 H(+) = 2-C-methyl-D-erythritol 2,4-cyclic diphosphate + reduced [flavodoxin]. Its pathway is isoprenoid biosynthesis; isopentenyl diphosphate biosynthesis via DXP pathway; isopentenyl diphosphate from 1-deoxy-D-xylulose 5-phosphate: step 5/6. Converts 2C-methyl-D-erythritol 2,4-cyclodiphosphate (ME-2,4cPP) into 1-hydroxy-2-methyl-2-(E)-butenyl 4-diphosphate. The chain is 4-hydroxy-3-methylbut-2-en-1-yl diphosphate synthase (flavodoxin) from Pseudomonas fluorescens (strain ATCC BAA-477 / NRRL B-23932 / Pf-5).